The sequence spans 81 residues: UPF0349 protein SE_0633 (81 aa).

It belongs to the UPF0349 family.

The polypeptide is UPF0349 protein SE_0633 (Staphylococcus epidermidis (strain ATCC 12228 / FDA PCI 1200)).